The sequence spans 89 residues: Small membrane A-kinase anchor protein (89 aa).

The disordered stretch occupies residues 1–29 (MGCMKSKRRDPTQNSDSSEKVDGKPGKHG). Residue Gly-2 is the site of N-myristoyl glycine attachment. Positions 17 to 29 (SSEKVDGKPGKHG) are enriched in basic and acidic residues.

It belongs to the small membrane AKAP family. Post-translationally, may be palmitoylated at Cys-3.

The protein localises to the cell membrane. Binds to type I regulatory subunits of protein kinase A and may anchor/target them to the plasma membrane. In Danio rerio (Zebrafish), this protein is Small membrane A-kinase anchor protein.